The chain runs to 273 residues: Dermonecrotic toxin LhSicTox-alphaIA1ii (273 aa).

Histidine 5 is a catalytic residue. Mg(2+) is bound by residues glutamate 25 and aspartate 27. The Nucleophile role is filled by histidine 41. Disulfide bonds link cysteine 45/cysteine 51 and cysteine 47/cysteine 190. Aspartate 85 is a binding site for Mg(2+).

This sequence belongs to the arthropod phospholipase D family. Class II subfamily. Mg(2+) is required as a cofactor. Expressed by the venom gland.

It localises to the secreted. It carries out the reaction an N-(acyl)-sphingosylphosphocholine = an N-(acyl)-sphingosyl-1,3-cyclic phosphate + choline. The catalysed reaction is an N-(acyl)-sphingosylphosphoethanolamine = an N-(acyl)-sphingosyl-1,3-cyclic phosphate + ethanolamine. The enzyme catalyses a 1-acyl-sn-glycero-3-phosphocholine = a 1-acyl-sn-glycero-2,3-cyclic phosphate + choline. It catalyses the reaction a 1-acyl-sn-glycero-3-phosphoethanolamine = a 1-acyl-sn-glycero-2,3-cyclic phosphate + ethanolamine. Dermonecrotic toxins cleave the phosphodiester linkage between the phosphate and headgroup of certain phospholipids (sphingolipid and lysolipid substrates), forming an alcohol (often choline) and a cyclic phosphate. This toxin acts on sphingomyelin (SM). It may also act on ceramide phosphoethanolamine (CPE), lysophosphatidylcholine (LPC) and lysophosphatidylethanolamine (LPE), but not on lysophosphatidylserine (LPS), and lysophosphatidylglycerol (LPG). It acts by transphosphatidylation, releasing exclusively cyclic phosphate products as second products. Induces dermonecrosis, hemolysis, increased vascular permeability, edema, inflammatory response, and platelet aggregation. This is Dermonecrotic toxin LhSicTox-alphaIA1ii from Loxosceles hirsuta (Recluse spider).